The primary structure comprises 311 residues: Ribose-phosphate pyrophosphokinase (311 aa).

Residues 37-39 (DGE) and 96-97 (RQ) each bind ATP. Positions 130 and 170 each coordinate Mg(2+). Lys193 is an active-site residue. Residues Arg195, Asp219, and 223–227 (DTAGT) each bind D-ribose 5-phosphate.

Belongs to the ribose-phosphate pyrophosphokinase family. Class I subfamily. As to quaternary structure, homohexamer. It depends on Mg(2+) as a cofactor.

The protein localises to the cytoplasm. The enzyme catalyses D-ribose 5-phosphate + ATP = 5-phospho-alpha-D-ribose 1-diphosphate + AMP + H(+). It functions in the pathway metabolic intermediate biosynthesis; 5-phospho-alpha-D-ribose 1-diphosphate biosynthesis; 5-phospho-alpha-D-ribose 1-diphosphate from D-ribose 5-phosphate (route I): step 1/1. Its function is as follows. Involved in the biosynthesis of the central metabolite phospho-alpha-D-ribosyl-1-pyrophosphate (PRPP) via the transfer of pyrophosphoryl group from ATP to 1-hydroxyl of ribose-5-phosphate (Rib-5-P). In Aquifex aeolicus (strain VF5), this protein is Ribose-phosphate pyrophosphokinase.